A 105-amino-acid chain; its full sequence is Cuticle protein AM1159 (105 aa).

The Chitin-binding type R&amp;R domain occupies 16–81; sequence DGNFNYNFQT…PESPLLPVGP (66 aa). Residues 25–46 are disordered; the sequence is TSNGIEDTKTGTPGSQGQSNMQ.

As to expression, arthrodial membrane.

The chain is Cuticle protein AM1159 from Cancer pagurus (Rock crab).